We begin with the raw amino-acid sequence, 895 residues long: MNKHHPKLRSFYSIRKSILGVASVIVSTLFLITSQHQAQAAENTNTSDKISENQNNNATTTQPPKDTNQTQPATQPANTAKTYPAADESLKDAIKDPALENKEHDIGPREQVNFQLLDKNNETQYYHFFSIKDPADVYYTKKKAEVELDINTASTWKKFEVYENNQKLPVRLVSYSPVPEDHAYIRFPVSDGTQELKIVSSTQIDDGEETNYDYTKLVFAKPIYNDPSLVKSDTNDAVVTNDQSSSDASNQTNTNTSNQNTSTINNANNQPQATTNMSQPAQPKSSANADQASSQPAHETNSNGNTNDKTNESSNQSDVNQQYPPADESLQDAIKNPAIIDKEHTADNWRPIDFQMKNDKGERQFYHYASTVEPATVIFTKTGPIIELGLKTASTWKKFEVYEGDKKLPVELVSYDSDKDYAYIRFPVSNGTREVKIVSSIEYGENIHEDYDYTLMVFAQPITNNPDDYVDEETYNLQKLLAPYHKAKTLERQVYELEKLQEKLPEKYKAEYKKKLDQTRVELADQVKSAVTEFENVTPTNDQLTDVQEAHFVVFESEENSESVMDGFVEHPFYTATLNGQKYVVMKTKDDSYWKDLIVEGKRVTTVSKDPKNNSRTLIFPYIPDKAVYNAIVKVVVANIGYEGQYHVRIINQDINTKDDDTSQNNTSEPLNVQTGQEGKVADTDVAENSSTATNPKDASDKADVIEPDSDVVKDADNNIDKDVQHDVDHLSDMSDNNHFDKYDLKEMDTQIAKDTDRNVDKGADNSVGMSSNVDTDKDSNKNKDKVIQLNHIADKNNHNGKAAKLDVVKQNYNNTDKVTDKKTTEHLPSDIHKTVDKTVKTKEKAGTPSKENKLSQSKMLPKTGETTSSQSWWGLYALLGMLALFIPKFRKESK.

Positions 1 to 40 (MNKHHPKLRSFYSIRKSILGVASVIVSTLFLITSQHQAQA) are cleaved as a signal peptide. The segment at 42-84 (ENTNTSDKISENQNNNATTTQPPKDTNQTQPATQPANTAKTYP) is disordered. Residues 53-62 (NQNNNATTTQ) are compositionally biased toward low complexity. Positions 63–81 (PPKDTNQTQPATQPANTAK) are enriched in polar residues. The NEAT 1 domain maps to 105-232 (DIGPREQVNF…IYNDPSLVKS (128 aa)). The disordered stretch occupies residues 239–324 (VTNDQSSSDA…NQSDVNQQYP (86 aa)). The span at 240-276 (TNDQSSSDASNQTNTNTSNQNTSTINNANNQPQATTN) shows a compositional bias: low complexity. The segment covering 277-323 (MSQPAQPKSSANADQASSQPAHETNSNGNTNDKTNESSNQSDVNQQY) has biased composition (polar residues). NEAT domains lie at 345–471 (TADN…DYVD) and 543–660 (QLTD…TKDD). Disordered regions lie at residues 657–705 (TKDD…KADV), 752–782 (IAKD…DSNK), and 841–868 (KTKE…GETT). Polar residues-rich tracts occupy residues 663-677 (SQNN…QTGQ) and 687-697 (AENSSTATNPK). 2 stretches are compositionally biased toward basic and acidic residues: residues 752 to 764 (IAKD…DKGA) and 841 to 854 (KTKE…KENK). The segment covering 855–868 (LSQSKMLPKTGETT) has biased composition (polar residues). Positions 861–865 (LPKTG) match the LPXTG sorting signal motif. Position 864 is a pentaglycyl murein peptidoglycan amidated threonine (T864). Positions 865-895 (GETTSSQSWWGLYALLGMLALFIPKFRKESK) are cleaved as a propeptide — removed by sortase.

It belongs to the IsdH family.

The protein resides in the secreted. Its subcellular location is the cell wall. Binds human plasma haptoglobin-hemoglobin complexes, haptoglobin and hemoglobin. Binds haptoglobin-hemoglobin complexes with significantly higher affinity than haptoglobin alone. This chain is Iron-regulated surface determinant protein H (isdH), found in Staphylococcus aureus (strain MSSA476).